We begin with the raw amino-acid sequence, 61 residues long: Truncated 3-beta hydroxy-5-ene steroid dehydrogenase homolog (61 aa).

The protein belongs to the 3-beta-HSD family.

In Variola virus (isolate Human/India/Ind3/1967) (VARV), this protein is Truncated 3-beta hydroxy-5-ene steroid dehydrogenase homolog.